We begin with the raw amino-acid sequence, 777 residues long: Lon protease (777 aa).

The Lon N-terminal domain occupies 11 to 204 (IPVLPLRDVV…FLMAIMESEI (194 aa)). 356–363 (GPPGVGKT) contacts ATP. The 182-residue stretch at 592-773 (TNQIGQVIGL…EEVLKLSLEK (182 aa)) folds into the Lon proteolytic domain. Catalysis depends on residues Ser679 and Lys722.

This sequence belongs to the peptidase S16 family. In terms of assembly, homohexamer. Organized in a ring with a central cavity.

The protein localises to the cytoplasm. It catalyses the reaction Hydrolysis of proteins in presence of ATP.. Functionally, ATP-dependent serine protease that mediates the selective degradation of mutant and abnormal proteins as well as certain short-lived regulatory proteins. Required for cellular homeostasis and for survival from DNA damage and developmental changes induced by stress. Degrades polypeptides processively to yield small peptide fragments that are 5 to 10 amino acids long. Binds to DNA in a double-stranded, site-specific manner. This chain is Lon protease, found in Buchnera aphidicola subsp. Acyrthosiphon pisum (strain APS) (Acyrthosiphon pisum symbiotic bacterium).